A 494-amino-acid polypeptide reads, in one-letter code: Glucose-6-phosphate 1-dehydrogenase (494 aa).

Positions 46 and 150 each coordinate NADP(+). Residues His-180, Lys-184, Glu-218, and Asp-237 each contribute to the substrate site. His-242 serves as the catalytic Proton acceptor. Residue Lys-342 coordinates substrate.

This sequence belongs to the glucose-6-phosphate dehydrogenase family.

It catalyses the reaction D-glucose 6-phosphate + NADP(+) = 6-phospho-D-glucono-1,5-lactone + NADPH + H(+). It functions in the pathway carbohydrate degradation; pentose phosphate pathway; D-ribulose 5-phosphate from D-glucose 6-phosphate (oxidative stage): step 1/3. Its function is as follows. Catalyzes the oxidation of glucose 6-phosphate to 6-phosphogluconolactone. In Aggregatibacter actinomycetemcomitans (Actinobacillus actinomycetemcomitans), this protein is Glucose-6-phosphate 1-dehydrogenase.